We begin with the raw amino-acid sequence, 648 residues long: MLIGKRISGRYQILRVIGGGGMANVYLAEDIILDREVAIKILRFDYANDNEFIRRFRREAQSASSLDHPNIVSIYDLGEEDDIYYIVMEYVEGMTLKEYITANGPLHPKEALNIMEQIVSAIAHAHQNQIVHRDIKPHNILIDHMGNIKVTDFGIATALSSTTITHTNSVLGSVHYLSPEQARGGLATKKSDIYALGIVLFELLTGRIPFDGESAVSIALKHLQAETPSAKRWNPSVPQSVENIILKATAKDPFHRYETAEDMEADIKTAFDADRLNEKRFTIQEDEEMTKAIPIIKDEELAKAAGEKEAEVTTAQENKTKKNGKRKKWPWVLLTICLVFITAGILAVTVFPSLFMPKDVKIPDVSGMEYEKAAGLLEKEGLQVDSEVLEISDEKIEEGLMVKTDPKADTTVKEGATVTLYKSTGKAKTEIGDVTGQTVDQAKKALKDQGFNHVTVNEVNDEKNAGTVIDQNPSAGTELVPSEDQVKLTVSIGPEDITLRDLKTYSKEAASGYLEDNGLKLVEKEAYSDDVPEGQVVKQKPAAGTAVKPGNEVEVTFSLGPEKKPAKTVKEKVKIPYEPENEGDELQVQIAVDDADHSISDTYEEFKIKEPTERTIELKIEPGQKGYYQVMVNNKVVSYKTIEYPKDE.

Residues 1–330 (MLIGKRISGR…KKNGKRKKWP (330 aa)) lie on the Cytoplasmic side of the membrane. The region spanning 11–271 (YQILRVIGGG…DMEADIKTAF (261 aa)) is the Protein kinase domain. ATP is bound by residues 17–25 (IGGGGMANV) and lysine 40. The Proton acceptor role is filled by aspartate 134. Threonine 162, threonine 163, threonine 165, and threonine 167 each carry phosphothreonine; by autocatalysis. Position 214 is a phosphoserine; by autocatalysis (serine 214). Threonine 290, threonine 313, and threonine 320 each carry phosphothreonine; by autocatalysis. The chain crosses the membrane as a helical span at residues 331–351 (WVLLTICLVFITAGILAVTVF). Over 352-648 (PSLFMPKDVK…YKTIEYPKDE (297 aa)) the chain is Extracellular. 3 PASTA domains span residues 356-424 (MPKD…YKST), 425-492 (GKAK…TVSI), and 493-559 (GPED…TFSL).

This sequence belongs to the protein kinase superfamily. Ser/Thr protein kinase family. Homodimer. In terms of processing, autophosphorylation on threonine residue(s) and serine residue considerably increases the kinase activity of the protein. Dephosphorylated in vitro by PrpC.

It is found in the spore membrane. The enzyme catalyses L-seryl-[protein] + ATP = O-phospho-L-seryl-[protein] + ADP + H(+). It catalyses the reaction L-threonyl-[protein] + ATP = O-phospho-L-threonyl-[protein] + ADP + H(+). With respect to regulation, bryostatin activates PrkC activity and induces germination, whereas staurosporine inhibits PrkC and significantly reduced peptidoglycan-dependent germination. Kinase activity of isolated N-terminus stimulated by poly-L-lysine or myelin basic protein. In terms of biological role, protein kinase that is responsible for triggering spore germination in response to muropeptides, signaling bacteria to exit dormancy. PrkC is thus a germination receptor that binds peptidoglycan fragments containing m-Dpm (meso-diaminopimelate), which act as spore germinants. Autophosphorylates and phosphorylates EF-G (elongation factor G, fusA); the latter modification is likely necessary for germination in response to peptidoglycan. Another group did not detect phosphorylation of EF-G. PrkC is a substrate in vitro of the cotranscribed phosphatase PrpC, which suggests that they form a functional couple in vivo. Might also be involved in sporulation and biofilm formation. Does not seem to be involved in stress response. The chain is Serine/threonine-protein kinase PrkC (prkC) from Bacillus subtilis (strain 168).